The sequence spans 536 residues: Protein Rep68 (536 aa).

The region spanning 1 to 199 (MPGFYEIVIK…AQHLTHVSQT (199 aa)) is the PV NS1-Nuc domain. A divalent metal cation contacts are provided by Glu-83, His-90, and His-92. The short motif at 90–92 (HMH) is the RCR-2 element. Tyr-156 serves as the catalytic For nuclease activity. The short motif at 156-160 (YLLPK) is the RCR-3 element. Residues 196–211 (VSQTQEQNKENQNPNS) are compositionally biased toward polar residues. The disordered stretch occupies residues 196 to 216 (VSQTQEQNKENQNPNSDAPVI). The SF3 helicase domain occupies 308–463 (DPQYAASVFL…LDHDFGKVTK (156 aa)). An ATP-binding site is contributed by 334-341 (GPATTGKT). The interval 488-536 (KGGAKKRPAPSDADISEPKRVRESVAQPSTSDAEASINYADRLARGHSL) is disordered.

In terms of assembly, interacts with host TOPORS. Interacts with host KCTD5. It depends on a divalent metal cation as a cofactor.

The protein localises to the host nucleus. It carries out the reaction ATP + H2O = ADP + phosphate + H(+). Functionally, plays an essential role in the initiation of viral DNA synthesis. Binds specifically to an inverted terminal repeat element (ITR) on the 3' and 5' ends of the viral DNA, where it cleaves a site specifically to generate a priming site for initiation of the synthesis of a complementary strand. Also plays a role as transcriptional regulator, DNA helicase and as key factor in site-specific integration of the viral genome. Inhibits the host cell cycle G1/S and G2/M transitions. These arrests may provide essential cellular factors for viral DNA replication. This Mammalia (AAV-2) protein is Protein Rep68 (Rep68).